The sequence spans 346 residues: Biotin synthase (346 aa).

One can recognise a Radical SAM core domain in the interval 38 to 256 (RQVQVSTLLS…IAVARIMMPT (219 aa)). [4Fe-4S] cluster is bound by residues Cys53, Cys57, and Cys60. Cys97, Cys128, Cys188, and Arg260 together coordinate [2Fe-2S] cluster.

The protein belongs to the radical SAM superfamily. Biotin synthase family. As to quaternary structure, homodimer. [4Fe-4S] cluster is required as a cofactor. It depends on [2Fe-2S] cluster as a cofactor.

It carries out the reaction (4R,5S)-dethiobiotin + (sulfur carrier)-SH + 2 reduced [2Fe-2S]-[ferredoxin] + 2 S-adenosyl-L-methionine = (sulfur carrier)-H + biotin + 2 5'-deoxyadenosine + 2 L-methionine + 2 oxidized [2Fe-2S]-[ferredoxin]. The protein operates within cofactor biosynthesis; biotin biosynthesis; biotin from 7,8-diaminononanoate: step 2/2. In terms of biological role, catalyzes the conversion of dethiobiotin (DTB) to biotin by the insertion of a sulfur atom into dethiobiotin via a radical-based mechanism. The protein is Biotin synthase of Shigella boydii serotype 18 (strain CDC 3083-94 / BS512).